A 184-amino-acid polypeptide reads, in one-letter code: Large ribosomal subunit protein uL22A (184 aa).

Residue K46 forms a Glycyl lysine isopeptide (Lys-Gly) (interchain with G-Cter in ubiquitin) linkage. Residue T70 is modified to Phosphothreonine.

It belongs to the universal ribosomal protein uL22 family. Component of the large ribosomal subunit (LSU). Mature yeast ribosomes consist of a small (40S) and a large (60S) subunit. The 40S small subunit contains 1 molecule of ribosomal RNA (18S rRNA) and 33 different proteins (encoded by 57 genes). The large 60S subunit contains 3 rRNA molecules (25S, 5.8S and 5S rRNA) and 46 different proteins (encoded by 81 genes). uL22 is associated with the polypeptide exit tunnel.

Its subcellular location is the cytoplasm. Its function is as follows. Component of the ribosome, a large ribonucleoprotein complex responsible for the synthesis of proteins in the cell. The small ribosomal subunit (SSU) binds messenger RNAs (mRNAs) and translates the encoded message by selecting cognate aminoacyl-transfer RNA (tRNA) molecules. The large subunit (LSU) contains the ribosomal catalytic site termed the peptidyl transferase center (PTC), which catalyzes the formation of peptide bonds, thereby polymerizing the amino acids delivered by tRNAs into a polypeptide chain. The nascent polypeptides leave the ribosome through a tunnel in the LSU and interact with protein factors that function in enzymatic processing, targeting, and the membrane insertion of nascent chains at the exit of the ribosomal tunnel. The sequence is that of Large ribosomal subunit protein uL22A from Saccharomyces cerevisiae (strain ATCC 204508 / S288c) (Baker's yeast).